The following is a 227-amino-acid chain: Cytochrome c oxidase subunit 2 (227 aa).

Residues 1–14 are Mitochondrial intermembrane-facing; the sequence is MAYPMQLGFQDATS. A helical transmembrane segment spans residues 15-45; the sequence is PIMEELLHFHDHTLMIVFLISSLVLYIISLM. Residues 46–59 lie on the Mitochondrial matrix side of the membrane; sequence LTTKLTHTSTMDAQ. The helical transmembrane segment at 60-87 threads the bilayer; the sequence is EVETIWTILPAIILILIALPSLRILYMM. At 88–227 the chain is on the mitochondrial intermembrane side; that stretch reads DEINNPSLTV…YFEKWSASML (140 aa). His-161, Cys-196, Glu-198, Cys-200, His-204, and Met-207 together coordinate Cu cation. Glu-198 contacts Mg(2+). Tyr-218 is subject to Phosphotyrosine.

Belongs to the cytochrome c oxidase subunit 2 family. In terms of assembly, component of the cytochrome c oxidase (complex IV, CIV), a multisubunit enzyme composed of 14 subunits. The complex is composed of a catalytic core of 3 subunits MT-CO1, MT-CO2 and MT-CO3, encoded in the mitochondrial DNA, and 11 supernumerary subunits COX4I, COX5A, COX5B, COX6A, COX6B, COX6C, COX7A, COX7B, COX7C, COX8 and NDUFA4, which are encoded in the nuclear genome. The complex exists as a monomer or a dimer and forms supercomplexes (SCs) in the inner mitochondrial membrane with NADH-ubiquinone oxidoreductase (complex I, CI) and ubiquinol-cytochrome c oxidoreductase (cytochrome b-c1 complex, complex III, CIII), resulting in different assemblies (supercomplex SCI(1)III(2)IV(1) and megacomplex MCI(2)III(2)IV(2)). Found in a complex with TMEM177, COA6, COX18, COX20, SCO1 and SCO2. Interacts with TMEM177 in a COX20-dependent manner. Interacts with COX20. Interacts with COX16. Requires Cu cation as cofactor.

It is found in the mitochondrion inner membrane. It catalyses the reaction 4 Fe(II)-[cytochrome c] + O2 + 8 H(+)(in) = 4 Fe(III)-[cytochrome c] + 2 H2O + 4 H(+)(out). Its function is as follows. Component of the cytochrome c oxidase, the last enzyme in the mitochondrial electron transport chain which drives oxidative phosphorylation. The respiratory chain contains 3 multisubunit complexes succinate dehydrogenase (complex II, CII), ubiquinol-cytochrome c oxidoreductase (cytochrome b-c1 complex, complex III, CIII) and cytochrome c oxidase (complex IV, CIV), that cooperate to transfer electrons derived from NADH and succinate to molecular oxygen, creating an electrochemical gradient over the inner membrane that drives transmembrane transport and the ATP synthase. Cytochrome c oxidase is the component of the respiratory chain that catalyzes the reduction of oxygen to water. Electrons originating from reduced cytochrome c in the intermembrane space (IMS) are transferred via the dinuclear copper A center (CU(A)) of subunit 2 and heme A of subunit 1 to the active site in subunit 1, a binuclear center (BNC) formed by heme A3 and copper B (CU(B)). The BNC reduces molecular oxygen to 2 water molecules using 4 electrons from cytochrome c in the IMS and 4 protons from the mitochondrial matrix. The chain is Cytochrome c oxidase subunit 2 (MT-CO2) from Syncerus caffer (African buffalo).